The chain runs to 344 residues: Putative glycosyltransferase EpsH (344 aa).

Belongs to the glycosyltransferase 2 family.

May be involved in the production of the exopolysaccharide (EPS) component of the extracellular matrix during biofilm formation. EPS is responsible for the adhesion of chains of cells into bundles. Required for biofilm maintenance. In Bacillus subtilis (strain 168), this protein is Putative glycosyltransferase EpsH (epsH).